A 426-amino-acid chain; its full sequence is Glutamate-1-semialdehyde 2,1-aminomutase (426 aa).

The residue at position 265 (lysine 265) is an N6-(pyridoxal phosphate)lysine.

It belongs to the class-III pyridoxal-phosphate-dependent aminotransferase family. HemL subfamily. As to quaternary structure, homodimer. The cofactor is pyridoxal 5'-phosphate.

It localises to the cytoplasm. The enzyme catalyses (S)-4-amino-5-oxopentanoate = 5-aminolevulinate. It participates in porphyrin-containing compound metabolism; protoporphyrin-IX biosynthesis; 5-aminolevulinate from L-glutamyl-tRNA(Glu): step 2/2. This chain is Glutamate-1-semialdehyde 2,1-aminomutase, found in Escherichia coli (strain SMS-3-5 / SECEC).